We begin with the raw amino-acid sequence, 214 residues long: Protein get-1 (214 aa).

The Lumenal portion of the chain corresponds to Met1–Leu4. Residues Leu5 to Ala24 traverse the membrane as a helical segment. Over Thr25 to Arg110 the chain is Cytoplasmic. Positions Lys73–Thr107 form a coiled coil. Residues Val111–Phe131 form a helical membrane-spanning segment. At Trp132 to Ser155 the chain is on the lumenal side. Residues Val156 to Val172 form a helical membrane-spanning segment. At Ile173–Lys214 the chain is on the cytoplasmic side. Residues Gln190–Lys214 form a disordered region.

It belongs to the WRB/GET1 family. Interacts with GET3.

Its subcellular location is the endoplasmic reticulum membrane. In terms of biological role, required for the post-translational delivery of tail-anchored (TA) proteins to the endoplasmic reticulum. Acts as a membrane receptor for soluble GET3, which recognizes and selectively binds the transmembrane domain of TA proteins in the cytosol. This is Protein get-1 (get-1) from Neurospora crassa (strain ATCC 24698 / 74-OR23-1A / CBS 708.71 / DSM 1257 / FGSC 987).